Here is a 171-residue protein sequence, read N- to C-terminus: Sigma intracellular receptor 2 (171 aa).

Topologically, residues 1–6 are cytoplasmic; the sequence is MAVCAR. Residues 7-27 traverse the membrane as a helical segment; that stretch reads LLEWIFFFYFFSHIPITLLVD. Residues 8-153 enclose the EXPERA domain; the sequence is LEWIFFFYFF…PYLLVPVLLL (146 aa). The Lumenal portion of the chain corresponds to 28–66; it reads LQAVLPPSLYPQELLDLMKWYTVAFKDHLMANPPPWFKS. A helical transmembrane segment spans residues 67–87; that stretch reads FVYCEAILQLPFFPVAAYAFF. Residues Ile-73 and Gln-75 each contribute to the cholesterol site. Over 88–97 the chain is Cytoplasmic; it reads KGGCKWIRIP. A helical membrane pass occupies residues 98-118; that stretch reads AIVYSAHVATTVIAIIGHILF. The Lumenal portion of the chain corresponds to 119–137; sequence GEFPKSDVIAPLTQKDRLT. The helical transmembrane segment at 138–158 threads the bilayer; the sequence is LVSIYAPYLLVPVLLLLTMLF. At 159–171 the chain is on the cytoplasmic side; that stretch reads SPRYRQEEKRKRK. Residues 167–171 carry the ER retention motif motif; that stretch reads KRKRK.

It belongs to the TMEM97/sigma-2 receptor family. Homodimer.

The protein resides in the rough endoplasmic reticulum membrane. It is found in the nucleus membrane. Sigma-2 receptor which contributes to ameliorate dysfunctional cellular processes and slow degenerative progression by regulating cell functions including cholesterol biosynthesis/trafficking, membrane trafficking, autophagy, lipid membrane-bound protein trafficking, and receptor stabilization at the cell surface. Forms a ternary complex with PGRMC1 receptor and low density lipoprotein receptor/LDLR at the plasma membrane, which increases LDLR-mediated LDL cholesterol internalization. Decreases lysosomal sterol transporter NPC1 availability to the cell, probably through NPC1-binding, hence controlling lipid transport, including cholesterol and LBPA, outside of late endosome/lysosome. Binds regio- and stereoselective ligand 20(S)-hydroxycholesterol (20(S)-OHC), thereby linking OHC binding to cholesterol homeostasis. Also able to bind cholesterol. Binds histatin 1 (Hst 1)/HN1 salivary peptide at the ER membrane, which is critical for increasing mitochondria-ER contacts and stimulating Hst1 wound healing properties. May alter the activity of some cytochrome P450 proteins. Although shows homologies with sterol isomerases (EXPERA domain), not able to catalyze sterol isomerization. However, may act as sensors of these molecules. Acts as a quality control factor in the ER, promoting the proteolytic degradation of nonproductive and extramitochondrial precursor proteins in the ER membrane thus removing them from the ER surface. The chain is Sigma intracellular receptor 2 (tmem97) from Xenopus tropicalis (Western clawed frog).